The sequence spans 482 residues: Hydrogenase transcriptional regulatory protein HoxA (482 aa).

The region spanning 7-121 (TVLVVDDETR…HLIDTVRQAV (115 aa)) is the Response regulatory domain. Position 55 is a 4-aspartylphosphate (D55). Residues 167 to 394 (APGSPLDAVC…LRNEIYRAVA (228 aa)) enclose the Sigma-54 factor interaction domain. Residues 193 to 200 (GESGTGKE) and 265 to 274 (EIGDTSPAFQ) each bind ATP. The segment at residues 456–475 (KTHAAKELGLSRVGLRQKLL) is a DNA-binding region (H-T-H motif).

Its subcellular location is the cytoplasm. In terms of biological role, probable member of the two-component regulatory system involved in the regulation of the hydrogenase activity. HoxA is probably phosphorylated by a sensory component (which could be HoxX) and then acts in conjunction with sigma-54 as a transcriptional activator. This chain is Hydrogenase transcriptional regulatory protein HoxA (hoxA), found in Cupriavidus necator (strain ATCC 17699 / DSM 428 / KCTC 22496 / NCIMB 10442 / H16 / Stanier 337) (Ralstonia eutropha).